Reading from the N-terminus, the 319-residue chain is mRNA decay activator protein ZFP36 (319 aa).

Positions 1–15 (MDLSAIYESLQSMSH) are necessary for nuclear export. The necessary and sufficient for the association with mRNA decay enzymes and mRNA decay activation stretch occupies residues 1-92 (MDLSAIYESL…PTSPTATPTT (92 aa)). Necessary for localization of ARE-containing mRNAs to processing bodies (PBs) stretches follow at residues 1 to 166 (MDLS…DLAL) and 92 to 319 (TSSR…SVSE). S52 carries the phosphoserine; by MAPKAPK2 modification. At S58 the chain carries Phosphoserine. Residues 63–67 (PPPPG) form a P-P-P-P-G repeat. The segment covering 65 to 84 (PPGFAPLAPRPGPELSPSPT) has biased composition (pro residues). Positions 65-95 (PPGFAPLAPRPGPELSPSPTSPTATPTTSSR) are disordered. A phosphoserine mark is found at S80 and S82. T84 carries the post-translational modification Phosphothreonine. S85 carries the phosphoserine modification. A compositionally biased stretch (low complexity) spans 85–94 (SPTATPTTSS). Positions 87-160 (TATPTTSSRY…GSRCHFIHNP (74 aa)) are necessary for nuclear localization. The segment at 89 to 165 (TPTTSSRYKT…FIHNPTEDLA (77 aa)) is necessary for RNA-binding. 2 consecutive C3H1-type zinc fingers follow at residues 95 to 123 (RYKT…HGLG) and 133 to 161 (KYKT…HNPT). Residues 95 to 186 (RYKTELCRTY…ISFSGLPSGR (92 aa)) form a necessary for interaction with PABPN1 region. Residues 166 to 319 (LPGQPHVLRQ…PIFNRISVSE (154 aa)) form a necessary for mRNA decay activation region. S178 is modified (phosphoserine; by MAPKAPK2). A compositionally biased stretch (low complexity) spans 179 to 188 (FSGLPSGRRS). The interval 179-309 (FSGLPSGRRS…PQTPAPPRRL (131 aa)) is disordered. S189 is subject to Phosphoserine. The stretch at 190 to 194 (PPPPG) is one P-P-P-P-G repeat. Low complexity predominate over residues 196 to 208 (SGPSLSSCSFSPS). Residue S210 is modified to Phosphoserine. The P-P-P-P-G repeat unit spans residues 211–215 (PPPPG). Residue S220 is modified to Phosphoserine; by MAPK1; in vitro. Position 250 is a phosphothreonine (T250). Residues S269, S289, and S316 each carry the phosphoserine modification. A compositionally biased stretch (low complexity) spans 279-289 (SSGSSLGGSDS). The interaction with CNOT1 stretch occupies residues 305 to 319 (PPRRLPIFNRISVSE).

Associates with cytoplasmic CCR4-NOT and PAN2-PAN3 deadenylase complexes to trigger ARE-containing mRNA deadenylation and decay processes. Part of a mRNA decay activation complex at least composed of poly(A)-specific exoribonucleases CNOT6, EXOSC2 and XRN1 and mRNA-decapping enzymes DCP1A and DCP2. Associates with the RNA exosome complex. Interacts (via phosphorylated form) with 14-3-3 proteins; these interactions promote exclusion of ZFP36 from cytoplasmic stress granules in response to arsenite treatment in a MAPKAPK2-dependent manner and does not prevent CCR4-NOT deadenylase complex recruitment or ZFP36-induced ARE-containing mRNA deadenylation and decay processes. Interacts with 14-3-3 proteins; these interactions occur in response to rapamycin in an Akt-dependent manner. Interacts with AGO2 and AGO4. Interacts (via C-terminus) with CNOT1; this interaction occurs in a RNA-independent manner and induces mRNA deadenylation. Interacts (via N-terminus) with CNOT6. Interacts with CNOT6L. Interacts (via C-terminus) with CNOT7; this interaction occurs in a RNA-independent manner, induces mRNA deadenylation and is inhibited in a phosphorylation MAPKAPK2-dependent manner. Interacts (via unphosphorylated form) with CNOT8; this interaction occurs in a RNA-independent manner and is inhibited in a phosphorylation MAPKAPK2-dependent manner. Interacts with DCP1A. Interacts (via N-terminus) with DCP2. Interacts with EDC3. Interacts (via N-terminus) with EXOSC2. Interacts with heat shock 70 kDa proteins. Interacts with KHSRP; this interaction increases upon cytokine-induced treatment. Interacts with MAP3K4; this interaction enhances the association with SH3KBP1/CIN85. Interacts with MAPKAPK2; this interaction occurs upon skeletal muscle satellite cell activation. Interacts with NCL. Interacts with NUP214; this interaction increases upon lipopolysaccharide (LPS) stimulation. Interacts with PABPC1; this interaction occurs in a RNA-dependent manner. Interacts (via hypophosphorylated form) with PABPN1 (via RRM domain and C-terminal arginine-rich region); this interaction occurs in the nucleus in a RNA-independent manner, decreases in presence of single-stranded poly(A) RNA-oligomer and in a p38 MAPK-dependent-manner and inhibits nuclear poly(A) tail synthesis. Interacts with PAN2. Interacts (via C3H1-type zinc finger domains) with PKM. Interacts (via C3H1-type zinc finger domains) with nuclear RNA poly(A) polymerase. Interacts with PPP2CA; this interaction occurs in LPS-stimulated cells and induces ZFP36 dephosphorylation, and hence may promote ARE-containing mRNAs decay. Interacts (via C-terminus) with PRR5L (via C-terminus); this interaction may accelerate ZFP36-mediated mRNA decay during stress. Interacts (via C-terminus) with SFN; this interaction occurs in a phosphorylation-dependent manner. Interacts (via extreme C-terminal region) with SH3KBP1/CIN85 (via SH3 domains); this interaction enhances MAP3K4-induced phosphorylation of ZFP36 at Ser-58 and Ser-85 and does not alter neither ZFP36 binding to ARE-containing transcripts nor TNF-alpha mRNA decay. Interacts with XRN1. Interacts (via C-terminus and Ser-178 phosphorylated form) with YWHAB; this interaction occurs in a p38/MAPKAPK2-dependent manner, increases cytoplasmic localization of ZFP36 and protects ZFP36 from Ser-178 dephosphorylation by serine/threonine phosphatase 2A, and hence may be crucial for stabilizing ARE-containing mRNAs. Interacts (via phosphorylated form) with YWHAE. Interacts (via C-terminus) with YWHAG; this interaction occurs in a phosphorylation-dependent manner. Interacts with YWHAH; this interaction occurs in a phosphorylation-dependent manner. Interacts with YWHAQ; this interaction occurs in a phosphorylation-dependent manner. Interacts with (via C-terminus) YWHAZ; this interaction occurs in a phosphorylation-dependent manner. Does not interact with SH3KBP1. Interacts (via the 4EHP-binding motif) with EIF4E2; the interaction is direct. Interacts (via P-P-P-P-G repeats) with GIGYF2; the interaction is direct. Phosphorylated. Phosphorylation at serine and/or threonine residues occurs in a p38 MAPK- and MAPKAPK2-dependent manner. Phosphorylated by MAPKAPK2 at Ser-52 and Ser-178; phosphorylation increases its stability and cytoplasmic localization, promotes binding to 14-3-3 adapter proteins and inhibits the recruitment of cytoplasmic CCR4-NOT and PAN2-PAN3 deadenylase complexes to the mRNA decay machinery, thereby inhibiting ZFP36-induced ARE-containing mRNA deadenylation and decay processes. Phosphorylation by MAPKAPK2 does not impair ARE-containing RNA-binding. Phosphorylated in a MAPKAPK2- and p38 MAPK-dependent manner upon skeletal muscle satellite cell activation; this phosphorylation inhibits ZFP36-mediated mRNA decay activity, and hence stabilizes MYOD1 mRNA. Phosphorylated by MAPK1 upon mitogen stimulation. Phosphorylated at Ser-58 and Ser-85; these phosphorylations increase in a SH3KBP1-dependent manner. Phosphorylated at serine and threonine residues in a pyruvate kinase PKM- and p38 MAPK-dependent manner. Phosphorylation at Ser-52 may participate in the PKM-mediated degradation of ZFP36 in a p38 MAPK-dependent manner. Dephosphorylated by serine/threonine phosphatase 2A at Ser-178. In terms of processing, ubiquitinated; pyruvate kinase (PKM)-dependent ubiquitination leads to proteasomal degradation through a p38 MAPK signaling pathway. As to expression, expressed in skeletal muscle satellite cells. Strongly expressed in differentiated adipocytes compared to preadipocytes (at protein level). Expressed in embryonic stem cells (ESCs). Expressed in heart, placenta, kidney, intestine, liver, lung, thymus, fat and spleen.

It localises to the nucleus. Its subcellular location is the cytoplasm. The protein resides in the cytoplasmic granule. The protein localises to the P-body. In terms of biological role, zinc-finger RNA-binding protein that destabilizes numerous cytoplasmic AU-rich element (ARE)-containing mRNA transcripts by promoting their poly(A) tail removal or deadenylation, and hence provide a mechanism for attenuating protein synthesis. Acts as an 3'-untranslated region (UTR) ARE mRNA-binding adapter protein to communicate signaling events to the mRNA decay machinery. Recruits deadenylase CNOT7 (and probably the CCR4-NOT complex) via association with CNOT1, and hence promotes ARE-mediated mRNA deadenylation. Also functions by recruiting components of the cytoplasmic RNA decay machinery to the bound ARE-containing mRNAs. Self-regulates by destabilizing its own mRNA. Binds to 3'-UTR ARE of numerous mRNAs and of its own mRNA. Plays a role in anti-inflammatory responses; suppresses tumor necrosis factor (TNF)-alpha production by stimulating ARE-mediated TNF-alpha mRNA decay and several other inflammatory ARE-containing mRNAs in interferon (IFN)- and/or lipopolysaccharide (LPS)-induced macrophages. Also plays a role in the regulation of dendritic cell maturation at the post-transcriptional level, and hence operates as part of a negative feedback loop to limit the inflammatory response. Promotes ARE-mediated mRNA decay of hypoxia-inducible factor HIF1A mRNA during the response of endothelial cells to hypoxia. Positively regulates early adipogenesis of preadipocytes by promoting ARE-mediated mRNA decay of immediate early genes (IEGs). Negatively regulates hematopoietic/erythroid cell differentiation by promoting ARE-mediated mRNA decay of the transcription factor STAT5B mRNA. Plays a role in maintaining skeletal muscle satellite cell quiescence by promoting ARE-mediated mRNA decay of the myogenic determination factor MYOD1 mRNA. Also associates with and regulates the expression of non-ARE-containing target mRNAs at the post-transcriptional level, such as MHC class I mRNAs. Participates in association with argonaute RISC catalytic components in the ARE-mediated mRNA decay mechanism; assists microRNA (miRNA) targeting ARE-containing mRNAs. May also play a role in the regulation of cytoplasmic mRNA decapping; enhances decapping of ARE-containing RNAs, in vitro. Involved in the delivery of target ARE-mRNAs to processing bodies (PBs). In addition to its cytosolic mRNA-decay function, affects nuclear pre-mRNA processing. Negatively regulates nuclear poly(A)-binding protein PABPN1-stimulated polyadenylation activity on ARE-containing pre-mRNA during LPS-stimulated macrophages. Also involved in the regulation of stress granule (SG) and P-body (PB) formation and fusion. Plays a role in the regulation of keratinocyte proliferation, differentiation and apoptosis. Plays a role as a tumor suppressor by inhibiting cell proliferation in breast cancer cells. This Mus musculus (Mouse) protein is mRNA decay activator protein ZFP36.